A 159-amino-acid chain; its full sequence is Phosphopantetheine adenylyltransferase (159 aa).

Residue Thr9 participates in substrate binding. Residues 9-10 and His17 each bind ATP; that span reads TF. Substrate is bound by residues Lys41, Leu73, and Arg87. ATP contacts are provided by residues 88–90, Glu98, and 123–129; these read GLR and YSFISST.

It belongs to the bacterial CoaD family. Homohexamer. Mg(2+) serves as cofactor.

The protein localises to the cytoplasm. It catalyses the reaction (R)-4'-phosphopantetheine + ATP + H(+) = 3'-dephospho-CoA + diphosphate. It participates in cofactor biosynthesis; coenzyme A biosynthesis; CoA from (R)-pantothenate: step 4/5. Reversibly transfers an adenylyl group from ATP to 4'-phosphopantetheine, yielding dephospho-CoA (dPCoA) and pyrophosphate. This chain is Phosphopantetheine adenylyltransferase, found in Pseudomonas putida (strain ATCC 700007 / DSM 6899 / JCM 31910 / BCRC 17059 / LMG 24140 / F1).